A 167-amino-acid polypeptide reads, in one-letter code: MDKLTIISGCLFLAADIFAIASIANPDWINTGESAGALTVGLVRQCQTIHGRDRTCIPPRLPPEWVTTLFFIIMGIISLTVTCGLLVASHWRREATKYARWIAFTGMILFCMAALIFPIGFYINEVGGQPYKLPNNTVVGSSYVLFVLSIFFTIVGLLFAGKVCLPG.

This is an uncharacterized protein from Xenopus laevis (African clawed frog).